The primary structure comprises 123 residues: Small ribosomal subunit protein uS12 (123 aa).

3-methylthioaspartic acid is present on D89.

The protein belongs to the universal ribosomal protein uS12 family. In terms of assembly, part of the 30S ribosomal subunit. Contacts proteins S8 and S17. May interact with IF1 in the 30S initiation complex.

In terms of biological role, with S4 and S5 plays an important role in translational accuracy. Interacts with and stabilizes bases of the 16S rRNA that are involved in tRNA selection in the A site and with the mRNA backbone. Located at the interface of the 30S and 50S subunits, it traverses the body of the 30S subunit contacting proteins on the other side and probably holding the rRNA structure together. The combined cluster of proteins S8, S12 and S17 appears to hold together the shoulder and platform of the 30S subunit. This is Small ribosomal subunit protein uS12 from Rhizobium meliloti (strain 1021) (Ensifer meliloti).